Reading from the N-terminus, the 199-residue chain is Fe/S biogenesis protein NfuA (199 aa).

Residues cysteine 151 and cysteine 154 each coordinate [4Fe-4S] cluster.

This sequence belongs to the NfuA family. As to quaternary structure, homodimer. [4Fe-4S] cluster is required as a cofactor.

In terms of biological role, involved in iron-sulfur cluster biogenesis. Binds a 4Fe-4S cluster, can transfer this cluster to apoproteins, and thereby intervenes in the maturation of Fe/S proteins. Could also act as a scaffold/chaperone for damaged Fe/S proteins. The chain is Fe/S biogenesis protein NfuA from Xylella fastidiosa (strain 9a5c).